A 93-amino-acid chain; its full sequence is Small ribosomal subunit protein uS19 (93 aa).

It belongs to the universal ribosomal protein uS19 family.

Its function is as follows. Protein S19 forms a complex with S13 that binds strongly to the 16S ribosomal RNA. The polypeptide is Small ribosomal subunit protein uS19 (Campylobacter concisus (strain 13826)).